We begin with the raw amino-acid sequence, 406 residues long: Phosphopentomutase (406 aa).

The Mn(2+) site is built by Asp-10, Asp-305, His-310, Asp-346, His-347, and His-358.

This sequence belongs to the phosphopentomutase family. Mn(2+) is required as a cofactor.

It localises to the cytoplasm. The catalysed reaction is 2-deoxy-alpha-D-ribose 1-phosphate = 2-deoxy-D-ribose 5-phosphate. The enzyme catalyses alpha-D-ribose 1-phosphate = D-ribose 5-phosphate. The protein operates within carbohydrate degradation; 2-deoxy-D-ribose 1-phosphate degradation; D-glyceraldehyde 3-phosphate and acetaldehyde from 2-deoxy-alpha-D-ribose 1-phosphate: step 1/2. Functionally, isomerase that catalyzes the conversion of deoxy-ribose 1-phosphate (dRib-1-P) and ribose 1-phosphate (Rib-1-P) to deoxy-ribose 5-phosphate (dRib-5-P) and ribose 5-phosphate (Rib-5-P), respectively. The polypeptide is Phosphopentomutase (Vibrio vulnificus (strain CMCP6)).